We begin with the raw amino-acid sequence, 221 residues long: 5'-nucleotidase (221 aa).

Asp-14 serves as the catalytic Nucleophile.

This sequence belongs to the HAD-like hydrolase superfamily. Mn(2+) serves as cofactor. The cofactor is Mg(2+).

It catalyses the reaction a ribonucleoside 5'-phosphate + H2O = a ribonucleoside + phosphate. Its function is as follows. Specifically dephosphorylates nucleoside 5'-monophosphates to nucleosides and inorganic phosphate. Displays high activity toward 5'-UMP and 5'-IMP, significant activity against 5'-XMP and 5'-TMP, and low activity against 5'-CMP. The protein is 5'-nucleotidase of Pseudomonas aeruginosa (strain ATCC 15692 / DSM 22644 / CIP 104116 / JCM 14847 / LMG 12228 / 1C / PRS 101 / PAO1).